Here is a 166-residue protein sequence, read N- to C-terminus: Phosphopantetheine adenylyltransferase (166 aa).

Ser9 is a binding site for substrate. Residues 9–10 (SY) and His17 each bind ATP. Substrate contacts are provided by Lys41, Ile75, and Lys89. ATP is bound by residues 90-92 (GLR), Glu100, and 124-130 (LEHISSS).

Belongs to the bacterial CoaD family. In terms of assembly, homohexamer. Requires Mg(2+) as cofactor.

The protein resides in the cytoplasm. The catalysed reaction is (R)-4'-phosphopantetheine + ATP + H(+) = 3'-dephospho-CoA + diphosphate. It participates in cofactor biosynthesis; coenzyme A biosynthesis; CoA from (R)-pantothenate: step 4/5. Reversibly transfers an adenylyl group from ATP to 4'-phosphopantetheine, yielding dephospho-CoA (dPCoA) and pyrophosphate. This chain is Phosphopantetheine adenylyltransferase, found in Bifidobacterium longum (strain DJO10A).